The sequence spans 514 residues: MKYRDLRDFLAQLERQGELKRITAPVSTRLEMTEIADRVLRAGGPALLFENARHNDAPADMPVLANLFGTPRRVAWGMGADDVGALRETGELLASLREPEAPKGLRDALAKVSMLKAALWDMSPKTVRSAACQEIVWEGADVELSRLPIQTCWPGDVAPLLAWGLVITRGPNARRQNLGIYRQQPLGPNKLIMRWLSHRGGALDFRDHAQAHPGKPFPITVALGADPATILGAVTPVPDTLSEYQFAGLLRGSRTEVVKALGSDLSVPASAEIVLEGHLLPADDPRAVAAVVPEGANPPPATGYEMALEGPYGDHTGYYNEQDWFPVFTVDRITMRRNPIYHSTYTGKPPDEPAVLGVALNEVFVPLLRRQLPEIVDFYLPPEGCSYRLAVVSIRKQYAGHAKRVMFGLWSVLRQFMYTKFIVVVDEDIDPRDWTEVVWAMTTRMDPVRDTVLVENAPIDYLDFASPVSGLGGKMGLDATNKWPGETSREWGTPIHMDEAVKRRVDAMWDTLGL.

Mn(2+) is bound at residue asparagine 177. Prenylated FMN contacts are provided by residues 180–182, 194–196, and 199–200; these read IYR, RWL, and RG. Position 243 (glutamate 243) interacts with Mn(2+). Aspartate 314 functions as the Proton donor in the catalytic mechanism.

The protein belongs to the UbiD family. Homohexamer. Prenylated FMN is required as a cofactor. Requires Mn(2+) as cofactor.

It is found in the cell membrane. The enzyme catalyses a 4-hydroxy-3-(all-trans-polyprenyl)benzoate + H(+) = a 2-(all-trans-polyprenyl)phenol + CO2. The protein operates within cofactor biosynthesis; ubiquinone biosynthesis. Functionally, catalyzes the decarboxylation of 3-octaprenyl-4-hydroxy benzoate to 2-octaprenylphenol, an intermediate step in ubiquinone biosynthesis. The sequence is that of 3-octaprenyl-4-hydroxybenzoate carboxy-lyase from Bordetella pertussis (strain Tohama I / ATCC BAA-589 / NCTC 13251).